The chain runs to 2474 residues: Polyprotein P1234 (2474 aa).

In terms of domain architecture, Alphavirus-like MT spans 28–259 (EPRQVTPNDH…ESRKLLKSWH (232 aa)). The active-site For mRNA-capping enzyme nsP1 activity is His37. Zn(2+) contacts are provided by His79, Glu129, Cys134, and Cys141. The tract at residues 295-450 (GLYGKTTGYA…QKVPAEFDSF (156 aa)) is membrane-binding and oligomerization. S-palmitoyl cysteine; by host attachment occurs at residues Cys417 and Cys419. Residues 690–842 (DLTNPPYHEF…HNICTQVYHK (153 aa)) form the (+)RNA virus helicase ATP-binding domain. 721–728 (GVPGSGKS) contacts a ribonucleoside 5'-triphosphate. Positions 843–991 (SISRRCTLPV…IKEWEVEHAS (149 aa)) constitute a (+)RNA virus helicase C-terminal domain. A Peptidase C9 domain is found at 1004 to 1327 (DTFQNKANVC…NQLNAAFVGQ (324 aa)). The segment at 1005–1024 (TFQNKANVCWAKSLVPILET) is nucleolus localization signal. The active-site For cysteine protease nsP2 activity is the Cys1013. A Nuclear export signal motif is present at residues 1058 to 1067 (TRMYGVDLDS). His1083 (for cysteine protease nsP2 activity) is an active-site residue. A Nuclear localization signal motif is present at residues 1182–1186 (PTKRV). The 160-residue stretch at 1334-1493 (APSYRVKRMD…KIAEAIQMRT (160 aa)) folds into the Macro domain. Asp1343, Asn1357, Gly1365, Gly1445, Val1446, and Tyr1447 together coordinate ADP-D-ribose. 4 residues coordinate Zn(2+): Cys1595, Cys1597, Cys1620, and Cys1638. The tract at residues 1651–1706 (RVSPREYKSPQETAQEVSSTTSLTHSQFDLSVDGEELPAPSDLEADAPIPEPTPDD) is disordered. The segment at 1659-1857 (SPQETAQEVS…TCSDTDDELX (199 aa)) is HVD. The segment covering 1660 to 1679 (PQETAQEVSSTTSLTHSQFD) has biased composition (polar residues). Interaction with host CD2AP regions lie at residues 1726–1739 (VMNT…RRRR) and 1756–1767 (PMASVRFFRADL). Positions 1745-1793 (VTCDEREGNVLPMASVRFFRADLHSIVQETAEIRDTAASLQAPLSVATE) are interaction with host FHL1. The FGDF; binding to host G3BP1 signature appears at 1812 to 1815 (FGDF). Residues 1820–1828 (IESLSSELL) are interaction with host CD2AP. The short motif at 1830–1833 (FGDF) is the FGDF; binding to host G3BP1 element. Positions 2228–2343 (DAVLETDIAS…HGVVSDELMA (116 aa)) constitute a RdRp catalytic domain.

In terms of assembly, homododecamer. The enzyme forms a membrane-associated dodecameric ring with a central channel for the exchange of between the viral replication factories and the host cytoplasm. Interacts with non-structural protein 3. Interacts with RNA-directed RNA polymerase nsP4. Interacts with protease nsP2. Interacts with itself. Interacts with host STING1; this interaction results in inhibition of cGAS-STING signaling and increased levels of palmitoylation and protein stabilization of nsP1. Interacts with host TMEM45B; this interaction leads to viral replication inhibition. As to quaternary structure, interacts with mRNA-capping enzyme nsP1. Interacts (via C-terminus) with host G3BP1; this interaction inhibits the formation of host stress granules on viral mRNAs and the nsp3-G3BP1 complexes bind viral RNAs and probably orchestrate the assembly of viral replication complexes. Interacts (via C-terminus) with host G3BP2; this interaction inhibits the formation of host stress granules on viral mRNAs and the nsp3-G3BP2 complexes bind viral RNAs and probably orchestrate the assembly of viral replication complexes. Interacts (via C-terminus) with host NAP1L1. Interacts (via C-terminus) with host NAP1L4. Interacts (via C-terminus) with host DHX9; this interaction allows the recruitment of DHX9 to the plasma membrane, where it associates with viral replication complexes and may play a role in the translation-to-replication switch. Interacts (via C-terminus) with host FHL1 (via LIM domain 1); this interaction is required for viral RNA replication. Interacts (via C-terminus) with host CD2AP; this interaction plays a role in initiation of viral replication. Interacts (via C-terminus) with host SH3KBP1; this interaction plays a role in initiation of viral replication. Interacts with mRNA-capping enzyme nsP1. Interacts with protease nsP2. interacts with itself. Interacts with host TMEM45B; this interaction leads to viral replication inhibition. In terms of assembly, interacts with RNA-directed RNA polymerase nsP4. Interacts with mRNA-capping enzyme nsP1. Interacts with KPNA1/karyopherin-alpha1; this interaction probably allows the active transport of protease nsP2 into the host nucleus. It depends on Mg(2+) as a cofactor. Mn(2+) is required as a cofactor. Specific enzymatic cleavages in vivo yield mature proteins. The processing of the polyprotein is temporally regulated. In early stages (1.7 hpi), P1234 is first cleaved in trans through its nsP2 protease activity, releasing P123' and nsP4, which associate to form the early replication complex. At the same time, P1234 is also cut at the nsP1/nsP2 site early in infection but with lower efficiency. After replication of the viral minus-strand RNAs (4 hpi), the polyproteins are cut at the nsP1/nsP2 and nsP2/nsP3 sites very efficiently, preventing accumulation of P123' and P1234 and allowing the formation of the late replication complex. NsP3'/nsP4 site is not cleaved anymore and P34 is produced rather than nsP4. Post-translationally, specific enzymatic cleavages in vivo yield mature proteins. The processing of the polyprotein is temporally regulated. In early stages (1.7 hpi), P123 is cleaved at the nsP1/nsP2 site with low efficiency. After replication of the viral minus-strand RNAs (4 hpi), the polyproteins are cut at the nsP1/nsP2 and nsP2/nsP3 sites very efficiently, preventing accumulation of P123 and allowing the formation of the late replication complex. In terms of processing, specific enzymatic cleavages in vivo yield mature proteins. The processing of the polyprotein is temporally regulated. In early stages (1.7 hpi), P123' is cleaved at the nsP1/nsP2 site with low efficiency. After replication of the viral minus-strand RNAs (4 hpi), the polyproteins are cut at the nsP1/nsP2 and nsP2/nsP3 sites very efficiently, preventing accumulation of P123' and allowing the formation of the late replication complex. Palmitoylated by host palmitoyltransferases ZDHHC2 and ZDHHC19. Palmitoylation is increased by the interacton with host STING1. Post-translationally, phosphorylated by host on serines and threonines. In terms of processing, ubiquitinated; targets the protein for rapid degradation via the ubiquitin system. Nsp4 is present in extremely low quantities due to low frequency of translation through the amber stop-codon and the degradation by the ubiquitin pathway.

The protein localises to the host cytoplasmic vesicle membrane. Its subcellular location is the host cell membrane. It localises to the host cell projection. The protein resides in the host filopodium. It is found in the host nucleus. The protein localises to the host cytoplasm. It catalyses the reaction GTP + S-adenosyl-L-methionine = N(7)-methyl-GTP + S-adenosyl-L-homocysteine. It carries out the reaction N(7)-methyl-GTP + L-histidyl-[protein] = N(tele)-(N(7)-methylguanosine 5'-phospho)-L-histidyl-[protein] + diphosphate. The catalysed reaction is N(tele)-(N(7)-methylguanosine 5'-phospho)-L-histidyl-[protein] + a 5'-end diphospho-(purine-ribonucleoside) in mRNA + H(+) = a 5'-end (N(7)-methyl 5'-triphosphoguanosine)-(purine-ribonucleoside) in mRNA + L-histidyl-[protein]. The enzyme catalyses a 5'-end triphospho-ribonucleoside in mRNA + H2O = a 5'-end diphospho-ribonucleoside in mRNA + phosphate + H(+). It catalyses the reaction a ribonucleoside 5'-triphosphate + H2O = a ribonucleoside 5'-diphosphate + phosphate + H(+). It carries out the reaction ATP + H2O = ADP + phosphate + H(+). The catalysed reaction is RNA(n) + a ribonucleoside 5'-triphosphate = RNA(n+1) + diphosphate. The enzyme catalyses 4-O-(ADP-D-ribosyl)-L-aspartyl-[protein] + H2O = L-aspartyl-[protein] + ADP-D-ribose + H(+). It catalyses the reaction 5-O-(ADP-D-ribosyl)-L-glutamyl-[protein] + H2O = L-glutamyl-[protein] + ADP-D-ribose + H(+). It carries out the reaction RNA(n) + ATP = RNA(n)-3'-adenine ribonucleotide + diphosphate. The catalysed reaction is ADP-alpha-D-ribose 1''-phosphate + H2O = ADP-D-ribose + phosphate. In terms of biological role, inactive precursor of the viral replicase, which is activated by cleavages carried out by the viral protease nsP2. Its function is as follows. The early replication complex formed by the polyprotein P123 and nsP4 synthesizes minus-strand RNAs. As soon P123 is cleaved into mature proteins, the plus-strand RNAs synthesis begins. The early replication complex formed by the polyprotein P123' and nsP4 synthesizes minus-strand RNAs. Polyprotein P123' is a short-lived polyprotein that accumulates during early stage of infection. As soon P123' is cleaved into mature proteins, the plus-strand RNAs synthesis begins. Functionally, cytoplasmic capping enzyme that catalyzes two virus-specific reactions: methyltransferase and guanylyltransferase. mRNA-capping is necessary since all viral RNAs are synthesized in the cytoplasm, and host capping enzymes are restricted to the nucleus. The enzymatic reaction involves a covalent link between 7-methyl-GMP and nsP1, whereas eukaryotic capping enzymes form a covalent complex only with GMP. nsP1 capping consists in the following reactions: GTP is first methylated into 7-methyl-GMP and then is covalently linked to nsP1 to form the m7GMp-nsP1 complex from which 7-methyl-GMP complex is transferred to the mRNA to create the cap structure. NsP1 is also needed for the initiation of the minus-strand RNAs synthesis. At the initiation of virus replication, mediates the assembly of the viral replication complex made of the non-structural proteins, the association of this complex with the inner face of the plasma membrane and the formation of membranous spherules that serve as replication complex factories. Forms the neck of these spherules with a central channel for mediating communication and the passage of RNA, nucleotides, and small proteins between the viral replication complex and the host cytoplasm. Palmitoylated nsP1 is remodeling host cell cytoskeleton, and induces filopodium-like structure formation at the surface of the host cell. In terms of biological role, multifunctional protein whose N-terminus is part of the RNA polymerase complex and displays NTPase, RNA triphosphatase and helicase activities. NTPase and RNA triphosphatase are involved in viral RNA capping and helicase keeps a check on the dsRNA replication intermediates. The C-terminus harbors a protease that specifically cleaves the polyproteins and releases the mature proteins. Required for the shutoff of minus-strand RNAs synthesis. Specifically inhibits the host IFN response by promoting the nuclear export of host STAT1. Also inhibits host transcription by inducing the rapid proteasome-dependent degradation of POLR2A, a catalytic subunit of the RNAPII complex. The resulting inhibition of cellular protein synthesis serves to ensure maximal viral gene expression and to evade host immune response. Its function is as follows. Seems to be essential for minus-strand RNAs and subgenomic 26S mRNAs synthesis. Displays mono-ADP-ribosylhydrolase activity. ADP-ribosylation is a post-translational modification that controls various processes of the host cell and the virus probably needs to revert it for optimal viral replication. Binds proteins of FXR family and sequesters them into the viral RNA replication complexes thereby inhibiting the formation of host stress granules on viral mRNAs. The nsp3'-FXR complexes bind viral RNAs and probably orchestrate the assembly of viral replication complexes, thanks to the ability of FXR family members to self-assemble and bind DNA. Seems to be essential for minus-strand RNAs and subgenomic 26S mRNAs synthesis. Displays mono-ADP-ribosylhydrolase activity. ADP-ribosylation is a post-translational modification that controls various processes of the host cell and the virus probably needs to revert it for optimal viral replication. Binds proteins of G3BP family and sequesters them into the viral RNA replication complexes thereby inhibiting the formation of host stress granules on viral mRNAs. The nsp3-G3BP complexes bind viral RNAs and probably orchestrate the assembly of viral replication complexes, thanks to the ability of G3BP family members to self-assemble and bind DNA. Functionally, RNA dependent RNA polymerase. Replicates genomic and antigenomic RNA by recognizing replications specific signals. The early replication complex formed by the polyprotein P123 and nsP4 synthesizes minus-strand RNAs. The late replication complex composed of fully processed nsP1-nsP4 is responsible for the production of genomic and subgenomic plus-strand RNAs. The protein is Polyprotein P1234 of Aedes aegypti (Yellowfever mosquito).